The following is a 349-amino-acid chain: Biotin synthase (349 aa).

The region spanning 60-287 (GDVELATLLS…KARVRLSAGR (228 aa)) is the Radical SAM core domain. [4Fe-4S] cluster is bound by residues C75, C79, and C82. [2Fe-2S] cluster-binding residues include C119, C150, C210, and R282.

This sequence belongs to the radical SAM superfamily. Biotin synthase family. Homodimer. The cofactor is [4Fe-4S] cluster. It depends on [2Fe-2S] cluster as a cofactor.

It carries out the reaction (4R,5S)-dethiobiotin + (sulfur carrier)-SH + 2 reduced [2Fe-2S]-[ferredoxin] + 2 S-adenosyl-L-methionine = (sulfur carrier)-H + biotin + 2 5'-deoxyadenosine + 2 L-methionine + 2 oxidized [2Fe-2S]-[ferredoxin]. It participates in cofactor biosynthesis; biotin biosynthesis; biotin from 7,8-diaminononanoate: step 2/2. Functionally, catalyzes the conversion of dethiobiotin (DTB) to biotin by the insertion of a sulfur atom into dethiobiotin via a radical-based mechanism. The polypeptide is Biotin synthase (Albidiferax ferrireducens (strain ATCC BAA-621 / DSM 15236 / T118) (Rhodoferax ferrireducens)).